The sequence spans 340 residues: Phosphoribosylformylglycinamidine cyclo-ligase (340 aa).

The protein belongs to the AIR synthase family.

The protein localises to the cytoplasm. It catalyses the reaction 2-formamido-N(1)-(5-O-phospho-beta-D-ribosyl)acetamidine + ATP = 5-amino-1-(5-phospho-beta-D-ribosyl)imidazole + ADP + phosphate + H(+). It participates in purine metabolism; IMP biosynthesis via de novo pathway; 5-amino-1-(5-phospho-D-ribosyl)imidazole from N(2)-formyl-N(1)-(5-phospho-D-ribosyl)glycinamide: step 2/2. This Macrococcus caseolyticus (strain JCSC5402) (Macrococcoides caseolyticum) protein is Phosphoribosylformylglycinamidine cyclo-ligase.